A 502-amino-acid polypeptide reads, in one-letter code: Probable zinc metalloprotease MGG_02107 (502 aa).

Residues 1-21 (MRSPPGAVAALASVAAQLATA) form the signal peptide. Zn(2+) contacts are provided by His182, Asp202, and Glu235. N-linked (GlcNAc...) asparagine glycosylation occurs at Asn250. Zn(2+) is bound at residue Asp262. The interval 284-307 (QGGSPAGESKERAETRASIGGEND) is disordered. Asn375, Asn417, and Asn427 each carry an N-linked (GlcNAc...) asparagine glycan. Residues 414–502 (QVRNVTVDTS…KSPATMPFPG (89 aa)) form the Fibronectin type-III domain.

The protein belongs to the peptidase M28 family. M28B subfamily. It depends on Zn(2+) as a cofactor.

It is found in the secreted. The protein is Probable zinc metalloprotease MGG_02107 of Pyricularia oryzae (strain 70-15 / ATCC MYA-4617 / FGSC 8958) (Rice blast fungus).